A 535-amino-acid chain; its full sequence is Cytochrome P450 monooxygenase claQ (535 aa).

The next 2 membrane-spanning stretches (helical) occupy residues 7–27 and 225–245; these read IGTW…KLVG and YFAI…NLPT. Cysteine 472 provides a ligand contact to heme.

It belongs to the cytochrome P450 family. Heme is required as a cofactor.

The protein localises to the membrane. The protein operates within secondary metabolite biosynthesis; terpenoid biosynthesis. Cytochrome P450 monooxygenase; part of the gene cluster that mediates the biosynthesis of clavilactone A, a meroterpenoid that features a unique benzo-fused ten-membered carbocyclic ring unit with an alpha,beta-epoxy-gamma-lactone moiety, forming an intriguing 10/5/3 tricyclic nested skeleton. Cytochrome P450 monooxygenases claO, claP, claQ, claU, and claW are close orthologs, suggesting that a redundant function or pseudogenes are present in the cla cluster. These monoxygenases are not involved in clavilactone A biosynthesis nor its modification. ClaR, ClaS and ClaT are sufficient to produce clavilactone A. The biosynthesis begins with the prenyltransferase claS that transfers geranyl pyrophosphate (GPP) to hydroquinone to produces geranylhydroquinone. The cytochrome P450 monooxygenase claR then catalyzes the diradical coupling reaction between the intramolecular hydroquinone and allyl moieties to form the benzo-fused ten-membered carbocyclic ring unit of wigantol. Finally the cytochrome P450 monooxygenase claT exquisitely and stereoselectively assembles the alpha,beta-epoxy-gamma-lactone moiety, producing clavilactone A via arnebinol A. In Ampulloclitocybe clavipes (Club foot), this protein is Cytochrome P450 monooxygenase claQ.